The sequence spans 281 residues: 3-hydroxybutyryl-CoA dehydrogenase (281 aa).

This sequence belongs to the 3-hydroxyacyl-CoA dehydrogenase family.

The enzyme catalyses (3S)-3-hydroxybutanoyl-CoA + NADP(+) = acetoacetyl-CoA + NADPH + H(+). The protein operates within lipid metabolism; butanoate metabolism. This is 3-hydroxybutyryl-CoA dehydrogenase (hbd) from Clostridioides difficile (Peptoclostridium difficile).